A 127-amino-acid chain; its full sequence is Nuclear transport factor 2 (127 aa).

K4 carries the N6-acetyllysine modification. Positions 10–121 constitute an NTF2 domain; that stretch reads IGSSFIQHYY…WVCTNDMFRL (112 aa).

Homodimer. Interacts with RAN (GDP-bound form); the interaction is direct and regulates RAN nuclear import. Interacts with the nucleoporins NUP54, NUP58 and NUP62 (via FG repeats); recruits NUTF2 to the nuclear pore complex a step required for NUTF2-mediated GDP-bound RAN nuclear import. Interacts with CAPG; mediates its nuclear import.

The protein localises to the cytoplasm. Its subcellular location is the cytosol. The protein resides in the nucleus outer membrane. It is found in the nucleus. It localises to the nuclear pore complex. The protein localises to the nucleus inner membrane. Its subcellular location is the nucleoplasm. Mediates the import of GDP-bound RAN from the cytoplasm into the nucleus which is essential for the function of RAN in cargo receptor-mediated nucleocytoplasmic transport. Thereby, plays indirectly a more general role in cargo receptor-mediated nucleocytoplasmic transport. Interacts with GDP-bound RAN in the cytosol, recruits it to the nuclear pore complex via its interaction with nucleoporins and promotes its nuclear import. The sequence is that of Nuclear transport factor 2 from Bos taurus (Bovine).